The chain runs to 87 residues: Cell division protein FtsL (87 aa).

Over 1-3 the chain is Cytoplasmic; that stretch reads MSR. The helical transmembrane segment at 4–23 threads the bilayer; that stretch reads LLLIVLLACSIASAIGVVYM. Residues 24–87 lie on the Periplasmic side of the membrane; sequence RHMHRKLFVQ…ETSDIVVIRP (64 aa).

It belongs to the FtsL family. Part of a complex composed of FtsB, FtsL and FtsQ.

The protein resides in the cell inner membrane. Functionally, essential cell division protein. May link together the upstream cell division proteins, which are predominantly cytoplasmic, with the downstream cell division proteins, which are predominantly periplasmic. This chain is Cell division protein FtsL, found in Xanthomonas campestris pv. campestris (strain ATCC 33913 / DSM 3586 / NCPPB 528 / LMG 568 / P 25).